A 345-amino-acid polypeptide reads, in one-letter code: HTH-type transcriptional regulator reg1 (345 aa).

The 58-residue stretch at 1–58 folds into the HTH lacI-type domain; the sequence is MTTRLADIAAQAGVSEATVSRVLNGKPGVAATTRQSVLAALDVLGYERPVRLRRRSAG. The H-T-H motif DNA-binding region spans 5-24; the sequence is LADIAAQAGVSEATVSRVLN.

Functionally, transcription repressor involved in control of expression of alpha-amylase and chitinase genes and of actinorhodin production. This is HTH-type transcriptional regulator reg1 (reg1) from Streptomyces lividans.